The primary structure comprises 573 residues: N(2)-(2-carboxyethyl)arginine synthase (573 aa).

Residues Y271 and D301 each contribute to the substrate site. Residue 410–413 (IGFF) coordinates thiamine diphosphate. Residue 414–415 (RH) coordinates substrate. A thiamine diphosphate-binding site is contributed by 436-438 (SSF). Residue D463 participates in Mg(2+) binding. Residues 464-465 (GG), 490-495 (NDTNGL), and Y561 each bind thiamine diphosphate. Positions 490 and 492 each coordinate Mg(2+). L571 provides a ligand contact to substrate.

As to quaternary structure, homotetramer; dimer of dimers. Mg(2+) serves as cofactor. Requires thiamine diphosphate as cofactor.

The enzyme catalyses D-glyceraldehyde 3-phosphate + L-arginine = N(2)-(2-carboxyethyl)-L-arginine + phosphate + H(+). Involved in the biosynthesis of the beta-lactamase inhibitor, clavulanic acid. Catalyzes the thiamine diphosphate (ThDP) dependent condensation of D-glyceraldehyde-3-phosphate (D-G3P) with L-arginine to yield the beta-amino acid, N2-(2-carboxyethyl)arginine (CEA) via a beta-elimination resulting in the formation of an enol which undergoes a second elimination to generate the alpha,beta-unsaturated acryloyl-ThDP. This is N(2)-(2-carboxyethyl)arginine synthase from Streptomyces clavuligerus.